A 335-amino-acid chain; its full sequence is Succinylglutamate desuccinylase (335 aa).

Zn(2+) is bound by residues His-59, Glu-62, and His-151. The active site involves Glu-215.

Belongs to the AspA/AstE family. Succinylglutamate desuccinylase subfamily. Zn(2+) serves as cofactor.

The enzyme catalyses N-succinyl-L-glutamate + H2O = L-glutamate + succinate. It participates in amino-acid degradation; L-arginine degradation via AST pathway; L-glutamate and succinate from L-arginine: step 5/5. Its function is as follows. Transforms N(2)-succinylglutamate into succinate and glutamate. The protein is Succinylglutamate desuccinylase of Pseudomonas syringae pv. tomato (strain ATCC BAA-871 / DC3000).